The primary structure comprises 332 residues: MSKIGINGFGRIGRLVLRAAIDKGASVVAVNDPFIDVNYMVYLFKFDSTHGRFKGTVAAEGGFLVVNGQKITVFSERDPANINWASAGAEYVVESTGVFTTIDKASTHLKGGAKKVIISAPSADAPMFVCGVNLDAYSPDMKVVSNASCTTNCLAPLAKVINDNFEIVEGLMTTVHATTATQKTVDGPSGKLWRDGRGAAQNIIPAATGAAKAVGKVIPALNGKLTGMAFRVPTPNVSVVDLTVRLGKGATYDEIKAKVEEASKGPLKGILGYTDEEVVSTDFFSDTHSSVFDAKAGISLNDKFVKLISWYDNEFGYSNRVIDLIKYMQSKD.

Residues R11–I12, D32, and R77 each bind NAD(+). Residues S148–T150, T179, T208–G209, and R231 each bind D-glyceraldehyde 3-phosphate. Residue C149 is the Nucleophile of the active site. N313 serves as a coordination point for NAD(+).

This sequence belongs to the glyceraldehyde-3-phosphate dehydrogenase family. As to quaternary structure, homotetramer.

Its subcellular location is the cytoplasm. The enzyme catalyses D-glyceraldehyde 3-phosphate + phosphate + NAD(+) = (2R)-3-phospho-glyceroyl phosphate + NADH + H(+). It functions in the pathway carbohydrate degradation; glycolysis; pyruvate from D-glyceraldehyde 3-phosphate: step 1/5. In Drosophila melanogaster (Fruit fly), this protein is Glyceraldehyde-3-phosphate dehydrogenase 1 (Gapdh1).